The following is a 337-amino-acid chain: DNA-directed RNA polymerase subunit alpha (337 aa).

The segment at 1–231 (MRNITISAYT…KQLSVFDKIT (231 aa)) is alpha N-terminal domain (alpha-NTD). The segment at 248-337 (NTKLLQNITD…IAELKAQNEG (90 aa)) is alpha C-terminal domain (alpha-CTD).

This sequence belongs to the RNA polymerase alpha chain family. Homodimer. The RNAP catalytic core consists of 2 alpha, 1 beta, 1 beta' and 1 omega subunit. When a sigma factor is associated with the core the holoenzyme is formed, which can initiate transcription.

The enzyme catalyses RNA(n) + a ribonucleoside 5'-triphosphate = RNA(n+1) + diphosphate. In terms of biological role, DNA-dependent RNA polymerase catalyzes the transcription of DNA into RNA using the four ribonucleoside triphosphates as substrates. The sequence is that of DNA-directed RNA polymerase subunit alpha from Campylobacter jejuni subsp. doylei (strain ATCC BAA-1458 / RM4099 / 269.97).